We begin with the raw amino-acid sequence, 151 residues long: Large ribosomal subunit protein uL15 (151 aa).

Positions 1–57 are disordered; it reads MTLRLDSLKSNKGARRRKLRKGRGIAAGQGASCGFGMRGQKSRSGRPTRPGFEGGQM. Residues 12–23 are compositionally biased toward basic residues; it reads KGARRRKLRKGR. Positions 25-37 are enriched in gly residues; it reads IAAGQGASCGFGM.

Belongs to the universal ribosomal protein uL15 family. In terms of assembly, part of the 50S ribosomal subunit.

Functionally, binds to the 23S rRNA. In Synechococcus sp. (strain CC9605), this protein is Large ribosomal subunit protein uL15.